We begin with the raw amino-acid sequence, 704 residues long: Elongation factor G (704 aa).

The region spanning 8–291 (VRYRNIGISA…AVVEYLPSPS (284 aa)) is the tr-type G domain. GTP-binding positions include 17 to 24 (AHIDAGKT), 88 to 92 (DTPGH), and 142 to 145 (NKMD).

This sequence belongs to the TRAFAC class translation factor GTPase superfamily. Classic translation factor GTPase family. EF-G/EF-2 subfamily.

Its subcellular location is the cytoplasm. Catalyzes the GTP-dependent ribosomal translocation step during translation elongation. During this step, the ribosome changes from the pre-translocational (PRE) to the post-translocational (POST) state as the newly formed A-site-bound peptidyl-tRNA and P-site-bound deacylated tRNA move to the P and E sites, respectively. Catalyzes the coordinated movement of the two tRNA molecules, the mRNA and conformational changes in the ribosome. This chain is Elongation factor G, found in Blochmanniella pennsylvanica (strain BPEN).